Here is a 188-residue protein sequence, read N- to C-terminus: Probable chemoreceptor glutamine deamidase CheD (188 aa).

It belongs to the CheD family.

The enzyme catalyses L-glutaminyl-[protein] + H2O = L-glutamyl-[protein] + NH4(+). Probably deamidates glutamine residues to glutamate on methyl-accepting chemotaxis receptors (MCPs), playing an important role in chemotaxis. The protein is Probable chemoreceptor glutamine deamidase CheD of Caulobacter sp. (strain K31).